Here is a 259-residue protein sequence, read N- to C-terminus: Ribonuclease PH (259 aa).

Residues Arg-88 and 126–128 each bind phosphate; that span reads GTR.

This sequence belongs to the RNase PH family. As to quaternary structure, homohexameric ring arranged as a trimer of dimers.

The enzyme catalyses tRNA(n+1) + phosphate = tRNA(n) + a ribonucleoside 5'-diphosphate. Functionally, phosphorolytic 3'-5' exoribonuclease that plays an important role in tRNA 3'-end maturation. Removes nucleotide residues following the 3'-CCA terminus of tRNAs; can also add nucleotides to the ends of RNA molecules by using nucleoside diphosphates as substrates, but this may not be physiologically important. Probably plays a role in initiation of 16S rRNA degradation (leading to ribosome degradation) during starvation. This is Ribonuclease PH from Mycolicibacterium smegmatis (strain ATCC 700084 / mc(2)155) (Mycobacterium smegmatis).